We begin with the raw amino-acid sequence, 859 residues long: Leucine--tRNA ligase (859 aa).

A 'HIGH' region motif is present at residues 42 to 52 (PYPSGKLHMGH). Residues 618–622 (KMSKS) carry the 'KMSKS' region motif. Lys-621 contributes to the ATP binding site.

The protein belongs to the class-I aminoacyl-tRNA synthetase family.

It is found in the cytoplasm. The enzyme catalyses tRNA(Leu) + L-leucine + ATP = L-leucyl-tRNA(Leu) + AMP + diphosphate. The polypeptide is Leucine--tRNA ligase (Buchnera aphidicola subsp. Acyrthosiphon pisum (strain APS) (Acyrthosiphon pisum symbiotic bacterium)).